Reading from the N-terminus, the 115-residue chain is MNMLTALLVNITLSMLLIIIAFWLPQLNLYTEKANPYECGFDPMGSARLPFSMKFFLVAITFLLFDLEIALLLPLPWAIQMYYINIMMSTAFILVSVLALGLAYEWLQKGLEWTE.

The next 3 membrane-spanning stretches (helical) occupy residues 4–24 (LTAL…AFWL), 55–75 (FFLV…LLPL), and 83–103 (YINI…LGLA).

Belongs to the complex I subunit 3 family. In terms of assembly, core subunit of respiratory chain NADH dehydrogenase (Complex I) which is composed of 45 different subunits. Interacts with TMEM186. Interacts with TMEM242.

Its subcellular location is the mitochondrion inner membrane. The catalysed reaction is a ubiquinone + NADH + 5 H(+)(in) = a ubiquinol + NAD(+) + 4 H(+)(out). Its function is as follows. Core subunit of the mitochondrial membrane respiratory chain NADH dehydrogenase (Complex I) which catalyzes electron transfer from NADH through the respiratory chain, using ubiquinone as an electron acceptor. Essential for the catalytic activity of complex I. This is NADH-ubiquinone oxidoreductase chain 3 from Peromyscus polionotus (Oldfield mouse).